A 264-amino-acid chain; its full sequence is Phosphatidylglycerol--prolipoprotein diacylglyceryl transferase (264 aa).

3 helical membrane-spanning segments follow: residues 17–37, 59–79, and 95–115; these read LAIHWYGLTYLVAFGLFLWLA, LLFYGVLGVIIGGRLGYVLFY, and WKGGMAFHGGLLGVIGAMALF. Residue R142 coordinates a 1,2-diacyl-sn-glycero-3-phospho-(1'-sn-glycerol). The next 2 membrane-spanning stretches (helical) occupy residues 205–225 and 241–261; these read GQVSGAFLVGYGVLRFIAEYF and MGQWLCVPMVAAGVALWVWAG.

It belongs to the Lgt family.

The protein localises to the cell inner membrane. The enzyme catalyses L-cysteinyl-[prolipoprotein] + a 1,2-diacyl-sn-glycero-3-phospho-(1'-sn-glycerol) = an S-1,2-diacyl-sn-glyceryl-L-cysteinyl-[prolipoprotein] + sn-glycerol 1-phosphate + H(+). It participates in protein modification; lipoprotein biosynthesis (diacylglyceryl transfer). Its function is as follows. Catalyzes the transfer of the diacylglyceryl group from phosphatidylglycerol to the sulfhydryl group of the N-terminal cysteine of a prolipoprotein, the first step in the formation of mature lipoproteins. The chain is Phosphatidylglycerol--prolipoprotein diacylglyceryl transferase from Methylibium petroleiphilum (strain ATCC BAA-1232 / LMG 22953 / PM1).